The primary structure comprises 1322 residues: Serine/threonine-protein kinase TIO (1322 aa).

Residues 6–256 form the Protein kinase domain; the sequence is YHVIELVGEG…WPALREHPFV (251 aa). Residues 12-20 and Lys35 each bind ATP; that span reads VGEGSFGRV. Asp127 acts as the Proton acceptor in catalysis. Residues 1000–1322 are required for the binding to Kinesin-12 members; it reads CMEDRDLLKA…VIVAKVSGES (323 aa). 6 ARM repeats span residues 1056 to 1098, 1101 to 1140, 1143 to 1182, 1183 to 1223, 1226 to 1273, and 1281 to 1320; these read PRLA…DLSR, KAFYKYIGEASVLQPLKEYLTHVDPNIRAKACSALGNMCR, GYFYSALAEHQIIGLLIDRCADPDKRTQKFACFAIGNAAY, HNDT…NLVR, NKLC…LFSL, and QICRQFVKSSELFPVIARLKQSPEANIAHYASVIVAKVSG.

Belongs to the protein kinase superfamily. Ser/Thr protein kinase family. In terms of assembly, interacts with Kinesin-12 members KIN12A/PAKRP1 and KIN12B/PAKRP1L. Interacts with KIN7B/NACK2. As to expression, ubiquitous.

The protein resides in the cytoplasm. It localises to the cytoskeleton. The protein localises to the phragmoplast. The enzyme catalyses L-seryl-[protein] + ATP = O-phospho-L-seryl-[protein] + ADP + H(+). It catalyses the reaction L-threonyl-[protein] + ATP = O-phospho-L-threonyl-[protein] + ADP + H(+). In terms of biological role, plays a role in conventional modes of cytokinesis in meristems and during male gametogenesis but also acts in nonconventional modes of cytokinesis (cellularization) during female gametogenesis. Constitutes a signaling module in association with Kinesin-12 members that is required to support phragmoplast expansion and cell-plate growth in plant cells. The polypeptide is Serine/threonine-protein kinase TIO (TIO) (Arabidopsis thaliana (Mouse-ear cress)).